We begin with the raw amino-acid sequence, 178 residues long: Cytochrome b6-f complex iron-sulfur subunit 2 (178 aa).

A helical membrane pass occupies residues 17–36; it reads LLNFFTGAIVATTASAAIYP. A Rieske domain is found at 61 to 161; that stretch reads GHPIPASQIL…VQVKDDYIWI (101 aa). [2Fe-2S] cluster contacts are provided by Cys-107, His-109, Cys-125, and His-128. A disulfide bridge connects residues Cys-112 and Cys-127.

This sequence belongs to the Rieske iron-sulfur protein family. As to quaternary structure, the 4 large subunits of the cytochrome b6-f complex are cytochrome b6, subunit IV (17 kDa polypeptide, PetD), cytochrome f and the Rieske protein, while the 4 small subunits are PetG, PetL, PetM and PetN. The complex functions as a dimer. [2Fe-2S] cluster serves as cofactor.

It is found in the cellular thylakoid membrane. It carries out the reaction 2 oxidized [plastocyanin] + a plastoquinol + 2 H(+)(in) = 2 reduced [plastocyanin] + a plastoquinone + 4 H(+)(out). In terms of biological role, component of the cytochrome b6-f complex, which mediates electron transfer between photosystem II (PSII) and photosystem I (PSI), cyclic electron flow around PSI, and state transitions. The sequence is that of Cytochrome b6-f complex iron-sulfur subunit 2 from Nostoc sp. (strain PCC 7120 / SAG 25.82 / UTEX 2576).